The following is a 190-amino-acid chain: RRP15-like protein (190 aa).

The span at 1-11 shows a compositional bias: basic and acidic residues; sequence MSTKNRDRLVV. Disordered stretches follow at residues 1–69 and 119–190; these read MSTK…TRKE and QKTM…SDED. Residues 55–66 are compositionally biased toward basic residues; it reads QRKKKKVIKKLT. The stretch at 59-84 forms a coiled coil; that stretch reads KKVIKKLTRKEQSLKHSVKEYRIKLA. Basic and acidic residues predominate over residues 119–153; the sequence is QKTMSDAVKEKMTARDRKEARERFDGKNFDSDKFA. Over residues 167 to 190 the composition is skewed to acidic residues; it reads GEEEDEQMNIGDDEIDAGNYSDED.

This sequence belongs to the RRP15 family.

The polypeptide is RRP15-like protein (Caenorhabditis briggsae).